The following is a 313-amino-acid chain: Methionyl-tRNA formyltransferase (313 aa).

(6S)-5,6,7,8-tetrahydrofolate is bound at residue 112-115; sequence SLLP.

The protein belongs to the Fmt family.

It carries out the reaction L-methionyl-tRNA(fMet) + (6R)-10-formyltetrahydrofolate = N-formyl-L-methionyl-tRNA(fMet) + (6S)-5,6,7,8-tetrahydrofolate + H(+). Its function is as follows. Attaches a formyl group to the free amino group of methionyl-tRNA(fMet). The formyl group appears to play a dual role in the initiator identity of N-formylmethionyl-tRNA by promoting its recognition by IF2 and preventing the misappropriation of this tRNA by the elongation apparatus. This is Methionyl-tRNA formyltransferase from Geotalea uraniireducens (strain Rf4) (Geobacter uraniireducens).